Here is a 355-residue protein sequence, read N- to C-terminus: Protein RecA (355 aa).

67-74 (GPESSGKT) is a binding site for ATP. The tract at residues 335 to 355 (NSLVSDVESEDEGASESNEEF) is disordered. The segment covering 341-355 (VESEDEGASESNEEF) has biased composition (acidic residues).

The protein belongs to the RecA family.

The protein localises to the cytoplasm. Its function is as follows. Can catalyze the hydrolysis of ATP in the presence of single-stranded DNA, the ATP-dependent uptake of single-stranded DNA by duplex DNA, and the ATP-dependent hybridization of homologous single-stranded DNAs. It interacts with LexA causing its activation and leading to its autocatalytic cleavage. This is Protein RecA from Sodalis glossinidius.